The primary structure comprises 272 residues: Small ribosomal subunit protein uS3 (272 aa).

The region spanning 43-111 (IRELMTTGME…QIQLNILEVK (69 aa)) is the KH type-2 domain. Residues 218–272 (AKEAAQPSGRGRGGERRGGGERRRRNDRAERAPRQENAGAGAETPAAAPAEGGNA) form a disordered region. A compositionally biased stretch (basic and acidic residues) spans 229–238 (RGGERRGGGE). A compositionally biased stretch (low complexity) spans 253-272 (ENAGAGAETPAAAPAEGGNA).

Belongs to the universal ribosomal protein uS3 family. In terms of assembly, part of the 30S ribosomal subunit. Forms a tight complex with proteins S10 and S14.

Its function is as follows. Binds the lower part of the 30S subunit head. Binds mRNA in the 70S ribosome, positioning it for translation. This is Small ribosomal subunit protein uS3 from Micrococcus luteus (strain ATCC 4698 / DSM 20030 / JCM 1464 / CCM 169 / CCUG 5858 / IAM 1056 / NBRC 3333 / NCIMB 9278 / NCTC 2665 / VKM Ac-2230) (Micrococcus lysodeikticus).